Consider the following 157-residue polypeptide: Crossover junction endodeoxyribonuclease RuvC (157 aa).

Active-site residues include D7, E67, and D139. D7, E67, and D139 together coordinate Mg(2+).

This sequence belongs to the RuvC family. Homodimer which binds Holliday junction (HJ) DNA. The HJ becomes 2-fold symmetrical on binding to RuvC with unstacked arms; it has a different conformation from HJ DNA in complex with RuvA. In the full resolvosome a probable DNA-RuvA(4)-RuvB(12)-RuvC(2) complex forms which resolves the HJ. The cofactor is Mg(2+).

The protein resides in the cytoplasm. The catalysed reaction is Endonucleolytic cleavage at a junction such as a reciprocal single-stranded crossover between two homologous DNA duplexes (Holliday junction).. Functionally, the RuvA-RuvB-RuvC complex processes Holliday junction (HJ) DNA during genetic recombination and DNA repair. Endonuclease that resolves HJ intermediates. Cleaves cruciform DNA by making single-stranded nicks across the HJ at symmetrical positions within the homologous arms, yielding a 5'-phosphate and a 3'-hydroxyl group; requires a central core of homology in the junction. The consensus cleavage sequence is 5'-(A/T)TT(C/G)-3'. Cleavage occurs on the 3'-side of the TT dinucleotide at the point of strand exchange. HJ branch migration catalyzed by RuvA-RuvB allows RuvC to scan DNA until it finds its consensus sequence, where it cleaves and resolves the cruciform DNA. The protein is Crossover junction endodeoxyribonuclease RuvC of Prochlorococcus marinus (strain MIT 9312).